The following is a 165-amino-acid chain: Small ribosomal subunit protein uS5 (165 aa).

The 64-residue stretch at 10–73 folds into the S5 DRBM domain; sequence LVEKLVAVDR…EAARRNMITV (64 aa).

Belongs to the universal ribosomal protein uS5 family. Part of the 30S ribosomal subunit. Contacts proteins S4 and S8.

Functionally, with S4 and S12 plays an important role in translational accuracy. Its function is as follows. Located at the back of the 30S subunit body where it stabilizes the conformation of the head with respect to the body. The polypeptide is Small ribosomal subunit protein uS5 (Acinetobacter baylyi (strain ATCC 33305 / BD413 / ADP1)).